We begin with the raw amino-acid sequence, 134 residues long: Cytochrome b5 (134 aa).

Position 2 is an N-acetylalanine (Ala2). Lys7, Lys10, and Lys19 each carry N6-acetyllysine. A Cytochrome b5 heme-binding domain is found at 9–85 (VKYYTLEEIQ…SKTYIIGELH (77 aa)). Positions 44 and 68 each coordinate heme. A helical membrane pass occupies residues 109–131 (WWTNWVIPAISALAVALMYRLYM).

This sequence belongs to the cytochrome b5 family.

It localises to the endoplasmic reticulum membrane. It is found in the microsome membrane. Its function is as follows. Cytochrome b5 is a membrane-bound hemoprotein functioning as an electron carrier for several membrane-bound oxygenases. It is also involved in several steps of the sterol biosynthesis pathway, particularly in the C-5 double bond introduction during the C-5 desaturation. This chain is Cytochrome b5 (Cyb5a), found in Mus musculus (Mouse).